A 347-amino-acid polypeptide reads, in one-letter code: Phenylalanine--tRNA ligase alpha subunit (347 aa).

Mg(2+) is bound at residue E261.

This sequence belongs to the class-II aminoacyl-tRNA synthetase family. Phe-tRNA synthetase alpha subunit type 1 subfamily. In terms of assembly, tetramer of two alpha and two beta subunits. Requires Mg(2+) as cofactor.

The protein resides in the cytoplasm. It catalyses the reaction tRNA(Phe) + L-phenylalanine + ATP = L-phenylalanyl-tRNA(Phe) + AMP + diphosphate + H(+). The sequence is that of Phenylalanine--tRNA ligase alpha subunit from Streptococcus pyogenes serotype M3 (strain ATCC BAA-595 / MGAS315).